A 1092-amino-acid polypeptide reads, in one-letter code: Electroneutral sodium bicarbonate exchanger 1 (1092 aa).

Disordered stretches follow at residues 1–26, 55–95, and 243–263; these read MPAGSNEPDGVLSYQRPDEEAVVDQG, LGRQ…HDTP, and KKQSDPHSMDRDGQTVSPQSA. At 1-478 the chain is on the extracellular side; that stretch reads MPAGSNEPDG…DYRDALSLQC (478 aa). Residues 58–76 are compositionally biased toward basic residues; it reads QSHRHHRTHGQKHRRRGGR. Residues 243–255 show a composition bias toward basic and acidic residues; that stretch reads KKQSDPHSMDRDG. A helical transmembrane segment spans residues 479 to 499; it reads LASFLFLYCACMSPVITFGGL. Residues 500–507 lie on the Cytoplasmic side of the membrane; sequence LGEATEGR. A helical membrane pass occupies residues 508–528; it reads ISAIESLFGASMTGIAYSLFA. The Extracellular portion of the chain corresponds to 529-565; that stretch reads GQPLTILGSTGPVLVFEKILFKFCKDYALSYLSLRAC. The chain crosses the membrane as a helical span at residues 566-586; the sequence is IGLWTAFLCIVLVATDASSLV. Residues 587-595 lie on the Cytoplasmic side of the membrane; the sequence is CYITRFTEE. Residues 596–616 traverse the membrane as a helical segment; that stretch reads AFASLICIIFIYEAIEKLIHL. At 617–687 the chain is on the extracellular side; the sequence is AETYPIHMHS…EFIGSACGHH (71 aa). 2 cysteine pairs are disulfide-bonded: C636/C684 and C638/C672. Residues N646 and N666 are each glycosylated (N-linked (GlcNAc) asparagine). Residues 688 to 708 traverse the membrane as a helical segment; it reads GPYTPDVLFWSCILFFATFIV. Residues 709 to 731 lie on the Cytoplasmic side of the membrane; that stretch reads SSTLKTFKTSRYFPTRVRSTVSD. The helical transmembrane segment at 732 to 752 threads the bilayer; sequence FAVFLTIFTMVILDFLIGVPS. Residues 753–778 lie on the Extracellular side of the membrane; it reads PKLQVPSVFKPTRDDRGWFISPIGPN. A helical transmembrane segment spans residues 779–799; sequence PWWTVIAAIIPALLCTILIFM. At 800 to 824 the chain is on the cytoplasmic side; that stretch reads DQQITAVIINRKEHKLKKGCGYHLD. Residues 825–845 form a helical membrane-spanning segment; it reads LLVVAIMLGVCSLMGLPWFVA. Topologically, residues 846 to 881 are extracellular; that stretch reads ATVLSITHVNSLKLESECSAPGEQPKFLGIREQRVT. The helical transmembrane segment at 882-902 threads the bilayer; the sequence is GLMIFVLMGCSVFMTAVLKFI. The Cytoplasmic portion of the chain corresponds to 903 to 904; the sequence is PM. Residues 905-925 traverse the membrane as a helical segment; sequence PVLYGVFLYMGVSSLQGIQFF. Over 926 to 962 the chain is Extracellular; it reads DRLKLFGMPAKHQPDFIYLRHVPLRKVHLFTLVQLTC. The chain crosses the membrane as a helical span at residues 963–983; that stretch reads LVLLWVIKASPAAIVFPMMVL. Topologically, residues 984–1092 are cytoplasmic; sequence ALVFVRKVMD…GNTKEKSPFN (109 aa).

Belongs to the anion exchanger (TC 2.A.31) family. Homodimer. Expressed in the Purkinje cells and dendrites in the molecular layer of the cerebellum (at protein level). Expressed in the hippocampal neurons (at protein level). Strong expression observed in testis and moderate expression in kidney inner medulla, the submandibular gland, eye, cerebrum and cerebellum.

Its subcellular location is the cell membrane. The protein localises to the apical cell membrane. It localises to the basolateral cell membrane. The protein resides in the cytoplasmic vesicle. It is found in the secretory vesicle. Its subcellular location is the synaptic vesicle membrane. It catalyses the reaction 2 hydrogencarbonate(out) + chloride(in) + Na(+)(out) = 2 hydrogencarbonate(in) + chloride(out) + Na(+)(in). In terms of biological role, mediates electroneutral sodium- and carbonate-dependent chloride-HCO3(-) exchange with a Na(+):HCO3(-) stoichiometry of 2:1. Plays a major role in pH regulation in neurons. Mediates sodium reabsorption in the renal cortical collecting ducts. The chain is Electroneutral sodium bicarbonate exchanger 1 from Rattus norvegicus (Rat).